The sequence spans 585 residues: YTH domain-containing family protein 3 (585 aa).

3 disordered regions span residues 1 to 52 (MSAT…YPPM), 243 to 277 (RKPA…MNIG), and 304 to 351 (PQPL…QQLQ). Residue Ser2 is modified to N-acetylserine. Over residues 15–24 (NKVSVQNGSI) the composition is skewed to polar residues. Residue Ser23 is modified to Phosphoserine. Over residues 244–254 (KPAKPQPKLKP) the composition is skewed to basic residues. The segment covering 329–351 (QQQQGPQPQAQPHQVQPQQQQLQ) has biased composition (low complexity). The YTH domain maps to 416-550 (GRVFIIKSYS…EKAKQVLKII (135 aa)). RNA is bound by residues 422-424 (KSY), Asp428, 438-439 (WC), Asn468, Trp492, and Trp497.

The protein belongs to the YTHDF family. YTHDF3 subfamily. Interacts with CNOT1; promoting recruitment of the CCR4-NOT complex. Interacts with YTHDF1. Interacts with YTHDF2. Interacts with PAN3. (Microbial infection) Proteolytically cleaved by HIV-1 protease when incorporated into HIV-1 particles in a nucleocapsid-dependent-manner. Cleavage by HIV-1 protease probably ensures optimal infectivity of the mature virion.

It is found in the cytoplasm. The protein resides in the cytosol. Its subcellular location is the P-body. It localises to the stress granule. Specifically recognizes and binds N6-methyladenosine (m6A)-containing RNAs, and regulates their stability. M6A is a modification present at internal sites of mRNAs and some non-coding RNAs and plays a role in mRNA stability and processing. Acts as a regulator of mRNA stability by promoting degradation of m6A-containing mRNAs via interaction with the CCR4-NOT complex or PAN3. The YTHDF paralogs (YTHDF1, YTHDF2 and YTHDF3) share m6A-containing mRNAs targets and act redundantly to mediate mRNA degradation and cellular differentiation. Acts as a negative regulator of type I interferon response by down-regulating interferon-stimulated genes (ISGs) expression: acts by binding to FOXO3 mRNAs. Binds to FOXO3 mRNAs independently of METTL3-mediated m6A modification. Can also act as a regulator of mRNA stability in cooperation with YTHDF2 by binding to m6A-containing mRNA and promoting their degradation. Recognizes and binds m6A-containing circular RNAs (circRNAs); circRNAs are generated through back-splicing of pre-mRNAs, a non-canonical splicing process promoted by dsRNA structures across circularizing exons. Promotes formation of phase-separated membraneless compartments, such as P-bodies or stress granules, by undergoing liquid-liquid phase separation upon binding to mRNAs containing multiple m6A-modified residues: polymethylated mRNAs act as a multivalent scaffold for the binding of YTHDF proteins, juxtaposing their disordered regions and thereby leading to phase separation. The resulting mRNA-YTHDF complexes then partition into different endogenous phase-separated membraneless compartments, such as P-bodies, stress granules or neuronal RNA granules. May also recognize and bind N1-methyladenosine (m1A)-containing mRNAs: inhibits trophoblast invasion by binding to m1A-methylated transcripts of IGF1R, promoting their degradation. Its function is as follows. Has some antiviral activity against HIV-1 virus: incorporated into HIV-1 particles in a nucleocapsid-dependent manner and reduces viral infectivity in the next cycle of infection. May interfere with this early step of the viral life cycle by binding to N6-methyladenosine (m6A) modified sites on the HIV-1 RNA genome. The sequence is that of YTH domain-containing family protein 3 from Homo sapiens (Human).